The following is an 84-amino-acid chain: Acetylcholine receptor subunit alpha (84 aa).

2 cysteine pairs are disulfide-bonded: C7-C21 and C71-C72. N-linked (GlcNAc...) asparagine glycosylation is present at N20.

Belongs to the ligand-gated ion channel (TC 1.A.9) family. Acetylcholine receptor (TC 1.A.9.1) subfamily. Alpha-1/CHRNA1 sub-subfamily. In terms of assembly, one of the alpha chains that assemble within the acetylcholine receptor, a pentamer of two alpha chains, a beta, a delta, and a gamma (in immature muscle) or epsilon (in mature muscle) chains. The muscle heteropentamer composed of alpha-1, beta-1, delta, epsilon subunits interacts with the alpha-conotoxin ImII.

It localises to the postsynaptic cell membrane. The protein resides in the cell membrane. The catalysed reaction is K(+)(in) = K(+)(out). The enzyme catalyses Na(+)(in) = Na(+)(out). In terms of biological role, upon acetylcholine binding, the AChR responds by an extensive change in conformation that affects all subunits and leads to opening of an ion-conducting channel across the plasma membrane. In Felis catus (Cat), this protein is Acetylcholine receptor subunit alpha (CHRNA1).